The sequence spans 316 residues: Ribosomal protein L11 methyltransferase (316 aa).

Thr-157, Gly-178, Asp-200, and Asn-243 together coordinate S-adenosyl-L-methionine.

The protein belongs to the methyltransferase superfamily. PrmA family.

It is found in the cytoplasm. The enzyme catalyses L-lysyl-[protein] + 3 S-adenosyl-L-methionine = N(6),N(6),N(6)-trimethyl-L-lysyl-[protein] + 3 S-adenosyl-L-homocysteine + 3 H(+). Functionally, methylates ribosomal protein L11. The protein is Ribosomal protein L11 methyltransferase of Streptococcus pneumoniae (strain P1031).